A 348-amino-acid polypeptide reads, in one-letter code: Phosphoribosylformylglycinamidine cyclo-ligase (348 aa).

It belongs to the AIR synthase family.

The protein resides in the cytoplasm. It catalyses the reaction 2-formamido-N(1)-(5-O-phospho-beta-D-ribosyl)acetamidine + ATP = 5-amino-1-(5-phospho-beta-D-ribosyl)imidazole + ADP + phosphate + H(+). Its pathway is purine metabolism; IMP biosynthesis via de novo pathway; 5-amino-1-(5-phospho-D-ribosyl)imidazole from N(2)-formyl-N(1)-(5-phospho-D-ribosyl)glycinamide: step 2/2. In Ruegeria sp. (strain TM1040) (Silicibacter sp.), this protein is Phosphoribosylformylglycinamidine cyclo-ligase.